Reading from the N-terminus, the 421-residue chain is MDLENKVKKMGLGHEQGFGAPCLKCKEKCEGFELHFWRKICRNCKCGQEEHDVLLSNEEDRKVGKLFEDTKYTTLIAKLKSDGIPMYKRNVMILTNPVAAKKNVSINTVTYEWAPPVHNQALARQYMQMLPKEKQPVAGSEGAQYRKKQLAKQLPAHDQDPSKCHELSPREVKEMEQFVKKYKSEALGVGDVKLPCEMDAQGPKQMYIPGGDRSTLPAMGAMEDKSAEHKSSQYFCYCCKLSMKEGDPAIYAERAGYDKLWHPACFLCSICHELLVDMIYFWKNEKLYCGRHYCDSEKPRCAGCDELIFSNEYTQAENQNWHLKHFCCFDCDSILAGEIYVMVNDKPVCKPCYVKNHAVVCQGCHNAIDPEVQRVTYNNFSWHASTECFLCSCCSKCLIGQKFMPVEGMVFCSVECKKMMS.

Residues 92 to 199 (MILTNPVAAK…GDVKLPCEMD (108 aa)) enclose the PET domain. The segment at 133-164 (EKQPVAGSEGAQYRKKQLAKQLPAHDQDPSKC) is disordered. Positions 155 to 164 (PAHDQDPSKC) are enriched in basic and acidic residues. 3 LIM zinc-binding domains span residues 234–297 (YFCY…CDSE), 299–359 (PRCA…NHAV), and 362–421 (QGCH…KMMS).

It belongs to the prickle / espinas / testin family. As to quaternary structure, interacts via LIM domain 1 with ZYX. Interacts (via LIM domain 3) with ENAH and VASP. Interacts with ALKBH4, talin, actin, alpha-actinin, GRIP1 and PXN. Interacts (via LIM domain 2) with ACTL7A (via N-terminus). Heterodimer with ACTL7A; the heterodimer interacts with ENAH to form a heterotrimer.

Its subcellular location is the cytoplasm. It localises to the cell junction. The protein resides in the focal adhesion. In terms of biological role, scaffold protein that may play a role in cell adhesion, cell spreading and in the reorganization of the actin cytoskeleton. Plays a role in the regulation of cell proliferation. May act as a tumor suppressor. This Plecturocebus moloch (Dusky titi monkey) protein is Testin (TES).